The primary structure comprises 459 residues: Flagellar radial spoke protein 6 (459 aa).

Arginine 267 is subject to Asymmetric dimethylarginine. Positions 309–330 are disordered; it reads QGRTVTHKRDPPDEEEEPEKNF. Position 398 is an asymmetric dimethylarginine (arginine 398). The disordered stretch occupies residues 418–459; sequence CPPPPPVPQWGAPAAGVEGGQQLLLECNDLPPKPAPPEEEDE.

This sequence belongs to the flagellar radial spoke RSP4/6 family. In terms of assembly, the radial spoke head is made of five different polypeptides (RSP1, RSP4, RSP6, RSP9, and RSP10). In terms of processing, asymmetrically dimethylated at Arg-267 and Arg-398 during flagellum resorption. Probably methylated by PRMT1.

The protein resides in the cytoplasm. Its subcellular location is the cytoskeleton. The protein localises to the flagellum axoneme. Its function is as follows. Flagellar radial spokes contribute to the regulation of dynein arm activity and thus the pattern of flagellar bending. They consist of a thin stalk, which is attached to the a subfiber of the outer doublet microtubule, and a bulbous head, which is attached to the stalk and appears to interact with the projections from the central pair of microtubules. The sequence is that of Flagellar radial spoke protein 6 (RSP6) from Chlamydomonas reinhardtii (Chlamydomonas smithii).